The chain runs to 167 residues: uncharacterized protein (167 aa).

It is found in the virion. This is an uncharacterized protein from Acanthamoeba polyphaga (Amoeba).